Consider the following 513-residue polypeptide: Zinc finger CCCH-type with G patch domain-containing protein (513 aa).

Residues 155–178 (PCSYYLEGECRFDEAKCRFSHGAL) form a C3H1-type zinc finger. Acidic residues-rich tracts occupy residues 252 to 261 (DQDEDDELSS) and 273 to 283 (SDEAESDMDDL). The interval 252-283 (DQDEDDELSSEESTSSMRDASSDEAESDMDDL) is disordered. Residues 312-358 (TRGIGSKLMEKMGYIHGTGLGSDGRGIVTPVSAQILPQGRSLDACME) enclose the G-patch domain. The span at 477–495 (QVQMQSHKQELATLQAQER) shows a compositional bias: polar residues. The interval 477 to 513 (QVQMQSHKQELATLQAQERSLSKEQQTRKSKNKMFEF) is disordered. A compositionally biased stretch (basic and acidic residues) spans 496 to 513 (SLSKEQQTRKSKNKMFEF).

The protein localises to the nucleus. Transcription repressor. The sequence is that of Zinc finger CCCH-type with G patch domain-containing protein from Drosophila simulans (Fruit fly).